Consider the following 316-residue polypeptide: protein SLOW GREEN 1, chloroplastic (316 aa).

The transit peptide at 1-39 (MISSLSASSSLVSSFVAVKATPVTGPLIPRRDLLSIRIR) directs the protein to the chloroplast. 4 TPR repeats span residues 118 to 151 (VETL…QPEE), 152 to 185 (TEWK…NPLS), 226 to 259 (RDVR…DPKD), and 261 to 293 (RPYF…SPKK).

As to expression, ubiquitous. Preferentially expressed in newly formed green tissues.

Its subcellular location is the plastid. It is found in the chloroplast. Its function is as follows. Required for the early stage of chloroplast development. May be involved in chloroplast protein biosynthesis and/or degradation. The polypeptide is protein SLOW GREEN 1, chloroplastic (Arabidopsis thaliana (Mouse-ear cress)).